Consider the following 286-residue polypeptide: Pre-mRNA-processing protein 45 (286 aa).

Disordered stretches follow at residues 111–146 (TNDINYIKYENPNPNPNPNPNPNQEQQQQSSSSSSK) and 253–286 (KQRNEIRQQKQLQEKRLRDEKIKEIANRSKRRRY). Residues 132–145 (PNQEQQQQSSSSSS) show a composition bias toward low complexity. Positions 253–279 (KQRNEIRQQKQLQEKRLRDEKIKEIAN) are enriched in basic and acidic residues.

The protein belongs to the SNW family. In terms of assembly, associated with the spliceosome.

It localises to the nucleus. In terms of biological role, involved in pre-mRNA splicing. This is Pre-mRNA-processing protein 45 (PRP45) from Candida albicans (strain SC5314 / ATCC MYA-2876) (Yeast).